A 386-amino-acid chain; its full sequence is Small ribosomal subunit protein mS31 (386 aa).

The protein belongs to the mitochondrion-specific ribosomal protein mS31 family. In terms of assembly, component of the mitochondrial ribosome small subunit (28S) which comprises a 12S rRNA and about 30 distinct proteins.

It localises to the mitochondrion. In Bos taurus (Bovine), this protein is Small ribosomal subunit protein mS31 (MRPS31).